The primary structure comprises 343 residues: 3-dehydroquinate synthase (343 aa).

NAD(+)-binding positions include 86–90 (GALLD), 110–111 (TT), Lys123, and Lys132. Residues Glu165, His229, and His243 each coordinate Zn(2+).

Belongs to the sugar phosphate cyclases superfamily. Dehydroquinate synthase family. Co(2+) is required as a cofactor. Zn(2+) serves as cofactor. The cofactor is NAD(+).

Its subcellular location is the cytoplasm. It carries out the reaction 7-phospho-2-dehydro-3-deoxy-D-arabino-heptonate = 3-dehydroquinate + phosphate. It functions in the pathway metabolic intermediate biosynthesis; chorismate biosynthesis; chorismate from D-erythrose 4-phosphate and phosphoenolpyruvate: step 2/7. Its function is as follows. Catalyzes the conversion of 3-deoxy-D-arabino-heptulosonate 7-phosphate (DAHP) to dehydroquinate (DHQ). This Pyrobaculum islandicum (strain DSM 4184 / JCM 9189 / GEO3) protein is 3-dehydroquinate synthase.